A 393-amino-acid chain; its full sequence is (S)-mandelate dehydrogenase (393 aa).

The 377-residue stretch at 1-377 (MSQNLFNVED…SPDYLQNEGV (377 aa)) folds into the FMN hydroxy acid dehydrogenase domain. Y26 is a (S)-mandelate binding site. FMN-binding positions include 79-81 (PTG), S108, and Q129. Residue Y131 participates in (S)-mandelate binding. T156 is a binding site for FMN. A (S)-mandelate-binding site is contributed by R165. K250 lines the FMN pocket. Positions 274 and 277 each coordinate (S)-mandelate. Residue H274 is the Proton acceptor of the active site. FMN contacts are provided by residues 303–307 (DSGFR) and 326–327 (GR).

The protein belongs to the FMN-dependent alpha-hydroxy acid dehydrogenase family. In terms of assembly, homotetramer. FMN is required as a cofactor.

The protein resides in the cell inner membrane. The enzyme catalyses (S)-mandelate + A = phenylglyoxylate + AH2. The protein operates within aromatic compound metabolism; (R)-mandelate degradation; benzoate from (R)-mandelate: step 2/4. In terms of biological role, catalyzes the dehydrogenation of (S)-mandelate to phenylglyoxylate (benzoylformate). Is likely involved in the utilization of mandelate as a sole source of carbon and energy for growth. Active in vitro with the artificial electron acceptors 2,6-dichlorophenolindophenol (DCPIP) or ferricyanide, but in vivo most likely transfer the electron pair from the reduced flavin to a component of the electron transport chain in the membrane, possibly a quinone. Shows very low activity with oxygen as the electron acceptor, and also with 3-indolelactate and medium chain 2-hydroxyacids as substrates. This is (S)-mandelate dehydrogenase from Pseudomonas putida (Arthrobacter siderocapsulatus).